Consider the following 211-residue polypeptide: 2,3-bisphosphoglycerate-dependent phosphoglycerate mutase (211 aa).

Residues arginine 9–asparagine 16, threonine 22–glycine 23, arginine 61, glutamate 88–tyrosine 91, lysine 99, arginine 115–arginine 116, and glycine 159–asparagine 160 each bind substrate. The active-site Tele-phosphohistidine intermediate is the histidine 10. Catalysis depends on glutamate 88, which acts as the Proton donor/acceptor.

Belongs to the phosphoglycerate mutase family. BPG-dependent PGAM subfamily. As to quaternary structure, homodimer.

It catalyses the reaction (2R)-2-phosphoglycerate = (2R)-3-phosphoglycerate. It functions in the pathway carbohydrate degradation; glycolysis; pyruvate from D-glyceraldehyde 3-phosphate: step 3/5. Catalyzes the interconversion of 2-phosphoglycerate and 3-phosphoglycerate. This chain is 2,3-bisphosphoglycerate-dependent phosphoglycerate mutase, found in Sinorhizobium fredii (strain NBRC 101917 / NGR234).